The sequence spans 194 residues: dTTP/UTP pyrophosphatase (194 aa).

Asp-73 (proton acceptor) is an active-site residue.

It belongs to the Maf family. YhdE subfamily. The cofactor is a divalent metal cation.

It localises to the cytoplasm. It carries out the reaction dTTP + H2O = dTMP + diphosphate + H(+). The enzyme catalyses UTP + H2O = UMP + diphosphate + H(+). Nucleoside triphosphate pyrophosphatase that hydrolyzes dTTP and UTP. May have a dual role in cell division arrest and in preventing the incorporation of modified nucleotides into cellular nucleic acids. This Clostridium botulinum (strain ATCC 19397 / Type A) protein is dTTP/UTP pyrophosphatase.